A 392-amino-acid chain; its full sequence is Isocitrate dehydrogenase [NAD] subunit gamma, mitochondrial (392 aa).

Residues 1 to 39 constitute a mitochondrion transit peptide; that stretch reads MALKVATAAGGAVKAALRPALLWRPWEVLGSHEAPRRSF. Residues Thr-119 and Asn-132 each contribute to the citrate site. The substrate site is built by Arg-135, Arg-166, and Asp-253. Residue Asp-253 participates in Mn(2+) binding. The ADP site is built by Asn-311, Thr-312, and Asn-323.

The protein belongs to the isocitrate and isopropylmalate dehydrogenases family. As to quaternary structure, heterooligomer of subunits alpha (IDH3A), beta (IDH3B), and gamma (IDH3G) in the apparent ratio of 2:1:1. The heterodimer containing one IDH3A and one IDH3B subunit and the heterodimer containing one IDH3A and one IDH3G subunit assemble into a heterotetramer (which contains two subunits of IDH3A, one of IDH3B and one of IDH3G) and further into the heterooctamer. Mg(2+) is required as a cofactor. The cofactor is Mn(2+).

It is found in the mitochondrion. With respect to regulation, the heterotetramer and the heterodimer composed of IDH3A and IDH3G subunits can be allosterically activated by citrate (CIT) or/and ADP, and the two activators can act independently or synergistically. The heterodimer composed of IDH3A and IDH3B subunits cannot be allosterically regulated and the allosteric regulation of the heterotetramer is through the IDH3G subunit and not the IDH3B subunit. The IDH3G subunit contains the allosteric site which consists of a CIT-binding site and an ADP-binding site, and the binding of CIT and ADP causes conformational changes at the allosteric site which are transmitted to the active site in the catalytic subunit (IDH3A) through a cascade of conformational changes at the heterodimer interface, leading to stabilization of the isocitrate-binding at the active site and thus activation of the enzyme. ATP can activate the heterotetramer and the heterodimer composed of IDH3A and IDH3G subunits at low concentrations but inhibits their activities at high concentrations, whereas ATP exhibits only inhibitory effect on the heterodimer composed of IDH3A and IDH3B subunits. Functionally, regulatory subunit which plays a role in the allosteric regulation of the enzyme catalyzing the decarboxylation of isocitrate (ICT) into alpha-ketoglutarate. The heterodimer composed of the alpha (IDH3A) and beta (IDH3B) subunits and the heterodimer composed of the alpha (IDH3A) and gamma (IDH3G) subunits, have considerable basal activity but the full activity of the heterotetramer (containing two subunits of IDH3A, one of IDH3B and one of IDH3G) requires the assembly and cooperative function of both heterodimers. The protein is Isocitrate dehydrogenase [NAD] subunit gamma, mitochondrial (IDH3G) of Bos taurus (Bovine).